The sequence spans 816 residues: Phosphatidylinositol 4-kinase beta (816 aa).

Disordered regions lie at residues 1-30 (MGDT…GSLL), 101-120 (EDEM…RRRR), and 248-318 (AHRK…SFSS). Gly2 is modified (N-acetylglycine). Positions 2 to 68 (GDTIVEPAPL…VKLLHGGVAI (67 aa)) are interaction with ACBD3. The PIK helical domain maps to 29–242 (LLSVITEGVG…GTKLRKLILS (214 aa)). Phosphoserine is present on Ser258. At Thr263 the chain carries Phosphothreonine. 5 positions are modified to phosphoserine: Ser266, Ser275, Ser277, Ser284, and Ser294. Polar residues-rich tracts occupy residues 278–297 (DATA…SNPK) and 306–318 (SSST…SFSS). Ser428 carries the post-translational modification Phosphoserine. A Phosphothreonine modification is found at Thr438. At Ser511 the chain carries Phosphoserine. 2 positions are modified to phosphothreonine: Thr517 and Thr519. In terms of domain architecture, PI3K/PI4K catalytic spans 535–801 (EPWQEKVRRI…MVDGSMRSIT (267 aa)). Residues 541–547 (VRRIREG) form a G-loop region. Positions 668–676 (QVKDRHNGN) are catalytic loop. An activation loop region spans residues 687–711 (HIDFGFILSSSPRNLGFETSAFKLT).

This sequence belongs to the PI3/PI4-kinase family. Type III PI4K subfamily. Interacts with ARF1 and ARF3 in the Golgi complex, but not with ARF4, ARF5 or ARF6. Interacts with NCS1/FREQ in a calcium-independent manner. Interacts with CALN1/CABP8 and CALN2/CABP7; in a calcium-dependent manner; this interaction competes with NCS1/FREQ binding. Interacts with ACBD3. Interacts with ARMH3, YWHAB, YWHAE, YWHAG, YWHAH, YWHAQ, YWHAZ and SFN. Interacts with GGA2 (via VHS domain); the interaction is important for PI4KB location at the Golgi apparatus membrane. Interacts with ATG9A. The cofactor is Mg(2+). Requires Mn(2+) as cofactor.

The protein localises to the endomembrane system. The protein resides in the mitochondrion outer membrane. Its subcellular location is the rough endoplasmic reticulum membrane. It is found in the golgi apparatus. It localises to the golgi apparatus membrane. It carries out the reaction a 1,2-diacyl-sn-glycero-3-phospho-(1D-myo-inositol) + ATP = a 1,2-diacyl-sn-glycero-3-phospho-(1D-myo-inositol 4-phosphate) + ADP + H(+). Its activity is regulated as follows. Inhibited by wortmannin. Increased kinase activity upon interaction with NCS1/FREQ. In terms of biological role, phosphorylates phosphatidylinositol (PI) in the first committed step in the production of the second messenger inositol-1,4,5,-trisphosphate (PIP). May regulate Golgi disintegration/reorganization during mitosis, possibly via its phosphorylation. Involved in Golgi-to-plasma membrane trafficking. This Bos taurus (Bovine) protein is Phosphatidylinositol 4-kinase beta (PI4KB).